Consider the following 62-residue polypeptide: Photosystem II reaction center X protein (62 aa).

The chain crosses the membrane as a helical span at residues 26–46 (IASFFAAALLIVIPAAAFLIF).

Belongs to the PsbX family. Type 2 subfamily. PSII consists of a core antenna complex that captures photons, and an electron transfer chain that converts photonic excitation into a charge separation. PSII forms dimeric complexes.

It localises to the cellular thylakoid membrane. In terms of biological role, involved in the binding and/or turnover of quinones at the Q(B) site of Photosystem II. The sequence is that of Photosystem II reaction center X protein from Prochlorococcus marinus subsp. pastoris (strain CCMP1986 / NIES-2087 / MED4).